The sequence spans 265 residues: Probable trehalose-phosphate phosphatase (265 aa).

Catalysis depends on Asp-35, which acts as the Nucleophile. The Mg(2+) site is built by Asp-35, Asp-37, and Asp-213. 35–37 (DID) contacts substrate.

It belongs to the trehalose phosphatase family. It depends on Mg(2+) as a cofactor.

It carries out the reaction alpha,alpha-trehalose 6-phosphate + H2O = alpha,alpha-trehalose + phosphate. It functions in the pathway glycan biosynthesis; trehalose biosynthesis. Functionally, removes the phosphate from trehalose 6-phosphate to produce free trehalose. In Sinorhizobium fredii (strain NBRC 101917 / NGR234), this protein is Probable trehalose-phosphate phosphatase (otsB).